The following is a 97-amino-acid chain: Co-chaperonin GroES (97 aa).

The protein belongs to the GroES chaperonin family. Heptamer of 7 subunits arranged in a ring. Interacts with the chaperonin GroEL.

It is found in the cytoplasm. In terms of biological role, together with the chaperonin GroEL, plays an essential role in assisting protein folding. The GroEL-GroES system forms a nano-cage that allows encapsulation of the non-native substrate proteins and provides a physical environment optimized to promote and accelerate protein folding. GroES binds to the apical surface of the GroEL ring, thereby capping the opening of the GroEL channel. The protein is Co-chaperonin GroES of Oleispira antarctica.